Reading from the N-terminus, the 65-residue chain is uncharacterized protein (65 aa).

The disordered stretch occupies residues 24–65; sequence NNNNNNNNNNNNNNNNNNNNNNNNNNNNNNNKNNKNNNKNND.

This is an uncharacterized protein from Dictyostelium discoideum (Social amoeba).